A 255-amino-acid polypeptide reads, in one-letter code: Postacrosomal sheath WW domain-binding protein (255 aa).

Residues 15–87 (LIPNGESLLK…DLITNLTVEQ (73 aa)) form the GRAM domain. A run of 7 repeats spans residues 139 to 145 (YGAPPAG), 146 to 152 (YGAPPAG), 153 to 159 (YGAPPPG), 160 to 166 (YGAPPAG), 167 to 173 (YGAPPPG), 174 to 180 (YGAPPAG), and 202 to 208 (YGAPPLG). The tract at residues 139–208 (YGAPPAGYGA…PAGYGAPPLG (70 aa)) is 6 X 7 AA tandem repeat of Y-G-X-P-P-X-G. A PPxY motif motif is present at residues 171–174 (PPGY). Disordered stretches follow at residues 180–199 (GYGA…RASP) and 204–255 (APPL…ASSS).

Its function is as follows. May play a role in meiotic resumption and pronuclear formation, mediated by a WW domain-signaling pathway during fertilization. This chain is Postacrosomal sheath WW domain-binding protein (WBP2NL), found in Macaca fascicularis (Crab-eating macaque).